The following is a 293-amino-acid chain: Ribosomal protein L11 methyltransferase (293 aa).

Positions 145, 166, 188, and 230 each coordinate S-adenosyl-L-methionine.

It belongs to the methyltransferase superfamily. PrmA family.

The protein localises to the cytoplasm. The enzyme catalyses L-lysyl-[protein] + 3 S-adenosyl-L-methionine = N(6),N(6),N(6)-trimethyl-L-lysyl-[protein] + 3 S-adenosyl-L-homocysteine + 3 H(+). Its function is as follows. Methylates ribosomal protein L11. This chain is Ribosomal protein L11 methyltransferase, found in Klebsiella pneumoniae subsp. pneumoniae (strain ATCC 700721 / MGH 78578).